The sequence spans 210 residues: MAKDLDELLDEVETKFCRLDPLRLDLGERPKGGSGGGGTHSGDRNGAQEKDTLRSTETFKKEDDLDSLINEIFEEPNFDKKSFQKFKSKSSSNTSVRAPIQGLSKSCSPVYLSGSAIPCGIGTNTSQRACDRLRCVACDFQIVSYNDYMWDKSCDYLFFRNNMPEFHKLKTKLIEKKGARAYACQCSWRTVEELTDLQADHELRWVCGKH.

The segment at 1–77 (MAKDLDELLD…LINEIFEEPN (77 aa)) is required for interaction with FAM161A. The tract at residues 24-59 (LDLGERPKGGSGGGGTHSGDRNGAQEKDTLRSTETF) is disordered. Basic and acidic residues predominate over residues 41 to 59 (SGDRNGAQEKDTLRSTETF).

In terms of assembly, interacts (via N-terminus) with FAM161A (via central region); the interaction is direct.

The protein localises to the cytoplasm. The protein resides in the photoreceptor inner segment. May be involved in photoreceptor outer segment disk morphogenesis. The polypeptide is Cilia- and flagella-associated protein 418 (Rattus norvegicus (Rat)).